A 529-amino-acid polypeptide reads, in one-letter code: Bifunctional purine biosynthesis protein PurH (529 aa).

The MGS-like domain occupies 1–148; the sequence is MNNVRPIRRA…KNHKDTTIVV (148 aa).

This sequence belongs to the PurH family.

It carries out the reaction (6R)-10-formyltetrahydrofolate + 5-amino-1-(5-phospho-beta-D-ribosyl)imidazole-4-carboxamide = 5-formamido-1-(5-phospho-D-ribosyl)imidazole-4-carboxamide + (6S)-5,6,7,8-tetrahydrofolate. The enzyme catalyses IMP + H2O = 5-formamido-1-(5-phospho-D-ribosyl)imidazole-4-carboxamide. The protein operates within purine metabolism; IMP biosynthesis via de novo pathway; 5-formamido-1-(5-phospho-D-ribosyl)imidazole-4-carboxamide from 5-amino-1-(5-phospho-D-ribosyl)imidazole-4-carboxamide (10-formyl THF route): step 1/1. It functions in the pathway purine metabolism; IMP biosynthesis via de novo pathway; IMP from 5-formamido-1-(5-phospho-D-ribosyl)imidazole-4-carboxamide: step 1/1. The sequence is that of Bifunctional purine biosynthesis protein PurH from Shewanella frigidimarina (strain NCIMB 400).